Consider the following 233-residue polypeptide: Orotidine 5'-phosphate decarboxylase (233 aa).

Substrate is bound by residues Asp-9, Lys-31, 58–67 (DLKLHDIPNT), Thr-120, Arg-182, Gln-191, Gly-211, and Arg-212. Lys-60 acts as the Proton donor in catalysis.

The protein belongs to the OMP decarboxylase family. Type 1 subfamily. Homodimer.

The catalysed reaction is orotidine 5'-phosphate + H(+) = UMP + CO2. The protein operates within pyrimidine metabolism; UMP biosynthesis via de novo pathway; UMP from orotate: step 2/2. In terms of biological role, catalyzes the decarboxylation of orotidine 5'-monophosphate (OMP) to uridine 5'-monophosphate (UMP). The chain is Orotidine 5'-phosphate decarboxylase from Listeria monocytogenes serotype 4b (strain CLIP80459).